A 576-amino-acid chain; its full sequence is Boron transporter 1 (576 aa).

Residues 1 to 84 (MSNESTRVTV…SDWVDAFNYR (84 aa)) are Cytoplasmic-facing. The interval 19-48 (ECAQALERTNDELDRESSVSESRSDEESHE) is disordered. The segment covering 26-48 (RTNDELDRESSVSESRSDEESHE) has biased composition (basic and acidic residues). A helical membrane pass occupies residues 85–105 (VIPSIVDTYFNNLLPAIAFAQ). Residues 106–116 (DMFDRTDNSYG) are Extracellular-facing. A helical membrane pass occupies residues 117 to 134 (VNEVLLSSAMAGIVFGVL). The Cytoplasmic segment spans residues 135-140 (GGQPLC). A helical membrane pass occupies residues 141–160 (IVGVTGPISIFNYTVYEIIK). Residues 161 to 165 (PLNTS) lie on the Extracellular side of the membrane. Residues 166–186 (YFGFMFWICMWSMIFHLVLAF) traverse the membrane as a helical segment. At 187–192 (TNAVCL) the chain is on the cytoplasmic side. Residues 193–213 (LQYVTTFPCDIFGLFINVVYI) traverse the membrane as a helical segment. Over 214–235 (QKGIQILTRQFSAKSGEKSVQD) the chain is Extracellular. Residues 236–256 (GFASVVVALVMTAFGLFFKLF) traverse the membrane as a helical segment. Residues 257 to 274 (HYYPLFSHRIRTFISDYS) lie on the Cytoplasmic side of the membrane. Residues 275–295 (TALSVLFWSSFTHFGGYLHDV) traverse the membrane as a helical segment. The Extracellular portion of the chain corresponds to 296–329 (KFKKLPITKAFFPTSKVNRPQNTWLAYEPIPVKD). Residues 330–350 (VFIALPFGIFLTILFYFDHNV) traverse the membrane as a helical segment. Residues 351 to 373 (SSLMAQRHQYKLKKPSSFHYDFA) lie on the Cytoplasmic side of the membrane. Residues 374–394 (LLGLTTCISGVLGIPAPNGLI) traverse the membrane as a helical segment. The Extracellular segment spans residues 395–438 (PQAPLHTETLLVRDSNQKVISCVEQRFTNTFQGLMILGTMTRPL). A helical transmembrane segment spans residues 439–459 (LVCLGEIPQAVLSGLFFIMGI). Residues 460–495 (NGLMTNSIIQRLVFLFSDPNRRDNTSPLMKVSKKSM) lie on the Cytoplasmic side of the membrane. The helical transmembrane segment at 496 to 516 (LIFLSFSLTGFAGEFAITNTI) threads the bilayer. Topologically, residues 517–518 (AA) are extracellular. Residues 519 to 539 (IGFPLVLLLSVLVSFSFAYIF) traverse the membrane as a helical segment. The Cytoplasmic portion of the chain corresponds to 540–576 (PTEELKILDTNVAQKFTIKNLLLENIRDAKFCDKHED).

This sequence belongs to the anion exchanger (TC 2.A.31) family.

It is found in the cell membrane. It localises to the vacuole membrane. Functions in boric acid/borate export across the plasma membrane, and thereby protects yeast cells from boron toxicity. Involved in the trafficking of proteins to the vacuole. The chain is Boron transporter 1 (BOR1) from Saccharomyces cerevisiae (strain ATCC 204508 / S288c) (Baker's yeast).